The following is a 636-amino-acid chain: Eisosome protein sle1 (636 aa).

The segment at 1 to 297 (MSHASKNYNA…HVIIYENKEG (297 aa)) is required for targeting the protein to eisosomes. Disordered regions lie at residues 111–205 (ANYM…SPAN), 222–284 (YSPS…VPPV), 313–387 (DPSG…TQHF), 400–451 (QYYQ…QPSL), 467–550 (DITP…VNNA), and 572–604 (PSNH…RFAN). 5 stretches are compositionally biased toward polar residues: residues 131 to 159 (PSQQ…QSYQ), 166 to 178 (RTSQ…NNYS), 188 to 204 (RRSS…GSPA), 237 to 255 (SYNN…TQKS), and 315 to 354 (SGSN…VVSR). A compositionally biased stretch (low complexity) spans 355 to 383 (SGQNNNQPAQPGQYNQQSQPVQSYQSGQS). Polar residues-rich tracts occupy residues 400-412 (QYYQ…QPVQ) and 422-439 (PVQS…QPVQ). Residues 471–484 (TASSTTANNAYASA) are compositionally biased toward low complexity. The span at 503–512 (SFERERDSGR) shows a compositional bias: basic and acidic residues. Residues 572–589 (PSNHAYSEGRSYTFTGGQ) show a composition bias toward polar residues.

As to quaternary structure, component of eisosomes, large cytoplasmic protein assemblies that localize to specialized domains termed MCCs on the plasma membrane.

The protein localises to the cytoplasm. It localises to the cell cortex. It is found in the cell tip. In terms of biological role, important for the biogenesis of filamentous eisosomes, large cytoplasmic protein assemblies that localize to specialized domains on the plasma membrane to cluster specific proteins at sites of membrane invaginations. The sequence is that of Eisosome protein sle1 (sle1) from Schizosaccharomyces pombe (strain 972 / ATCC 24843) (Fission yeast).